The primary structure comprises 1000 residues: uncharacterized protein (1000 aa).

A compositionally biased stretch (basic and acidic residues) spans 787-809 (RQYEKLKRQRAKSETERHQERHG). The disordered stretch occupies residues 787–812 (RQYEKLKRQRAKSETERHQERHGKLS).

This is an uncharacterized protein from Picosynechococcus sp. (strain ATCC 27264 / PCC 7002 / PR-6) (Agmenellum quadruplicatum).